The sequence spans 415 residues: Serine hydroxymethyltransferase (415 aa).

(6S)-5,6,7,8-tetrahydrofolate contacts are provided by residues Leu121 and 125–127; that span reads GHL. Lys229 carries the post-translational modification N6-(pyridoxal phosphate)lysine.

The protein belongs to the SHMT family. As to quaternary structure, homodimer. The cofactor is pyridoxal 5'-phosphate.

It localises to the cytoplasm. The enzyme catalyses (6R)-5,10-methylene-5,6,7,8-tetrahydrofolate + glycine + H2O = (6S)-5,6,7,8-tetrahydrofolate + L-serine. It participates in one-carbon metabolism; tetrahydrofolate interconversion. The protein operates within amino-acid biosynthesis; glycine biosynthesis; glycine from L-serine: step 1/1. Catalyzes the reversible interconversion of serine and glycine with tetrahydrofolate (THF) serving as the one-carbon carrier. This reaction serves as the major source of one-carbon groups required for the biosynthesis of purines, thymidylate, methionine, and other important biomolecules. Also exhibits THF-independent aldolase activity toward beta-hydroxyamino acids, producing glycine and aldehydes, via a retro-aldol mechanism. The protein is Serine hydroxymethyltransferase of Bordetella petrii (strain ATCC BAA-461 / DSM 12804 / CCUG 43448).